The sequence spans 136 residues: Large ribosomal subunit protein uL16 (136 aa).

Belongs to the universal ribosomal protein uL16 family. In terms of assembly, part of the 50S ribosomal subunit.

Functionally, binds 23S rRNA and is also seen to make contacts with the A and possibly P site tRNAs. This Actinobacillus succinogenes (strain ATCC 55618 / DSM 22257 / CCUG 43843 / 130Z) protein is Large ribosomal subunit protein uL16.